The chain runs to 387 residues: Xylose isomerase (387 aa).

Active-site residues include H53 and D56. 7 residues coordinate Mg(2+): E180, E216, H219, D244, D254, D256, and D286.

The protein belongs to the xylose isomerase family. Homotetramer. The cofactor is Mg(2+).

The protein localises to the cytoplasm. The enzyme catalyses alpha-D-xylose = alpha-D-xylulofuranose. The protein is Xylose isomerase (xylA) of Thermus caldophilus.